A 463-amino-acid chain; its full sequence is Argininosuccinate lyase (463 aa).

The protein belongs to the lyase 1 family. Argininosuccinate lyase subfamily.

The protein localises to the cytoplasm. It carries out the reaction 2-(N(omega)-L-arginino)succinate = fumarate + L-arginine. It functions in the pathway amino-acid biosynthesis; L-arginine biosynthesis; L-arginine from L-ornithine and carbamoyl phosphate: step 3/3. The polypeptide is Argininosuccinate lyase (Bacillus cereus (strain AH187)).